Here is a 799-residue protein sequence, read N- to C-terminus: Heat shock protein 90-6, mitochondrial (799 aa).

The transit peptide at 1-48 directs the protein to the mitochondrion; sequence MIRLSKRSVSTLLRSGNQSFRIAAAASTSRSSPSATDVKRSDTESRWY. Over residues 23 to 35 the composition is skewed to low complexity; that stretch reads AAAASTSRSSPSA. The interval 23-61 is disordered; that stretch reads AAAASTSRSSPSATDVKRSDTESRWYSSLTNGQSKNSGS. The segment covering 46 to 61 has biased composition (polar residues); that stretch reads RWYSSLTNGQSKNSGS. ATP-binding positions include glutamate 124, asparagine 128, aspartate 170, methionine 175, 190-191, 214-219, and threonine 269; these read SG and QFGVGF. Residues 314–337 form a disordered region; the sequence is EVEVEDDPTETKKDDQDDQTEKKK. Positions 322–334 are enriched in basic and acidic residues; the sequence is TETKKDDQDDQTE. Arginine 464 is an ATP binding site. Positions 766–777 are enriched in polar residues; sequence SPEVQPQQQQMA. Residues 766–799 form a disordered region; that stretch reads SPEVQPQQQQMAHSHDAETFEAEVVEPVEVDGKK. The segment covering 784–799 has biased composition (acidic residues); that stretch reads TFEAEVVEPVEVDGKK.

The protein belongs to the heat shock protein 90 family. Interacts with P23-1.

Its subcellular location is the mitochondrion. Molecular chaperone which stabilizes unfolding protein intermediates and functions as a folding molecular chaperone that assists the non-covalent folding of proteins in an ATP-dependent manner. The chain is Heat shock protein 90-6, mitochondrial from Arabidopsis thaliana (Mouse-ear cress).